The chain runs to 1551 residues: UDP-glucose:glycoprotein glucosyltransferase 1 (1551 aa).

Residues 1-42 form the signal peptide; the sequence is MCSRGDANTADAAAARRVTGLRYNMRLLIALALPCLFSLAEA. Asn-269, Asn-536, and Asn-1228 each carry an N-linked (GlcNAc...) asparagine glycan. Residues 1244 to 1551 are glucosyltransferase; the sequence is KAEEVKQDKD…QEGSQKHEEL (308 aa). Ser-1277 is modified (phosphoserine). The disordered stretch occupies residues 1531-1551; sequence KELGTLHTEETQEGSQKHEEL. Positions 1548-1551 match the Prevents secretion from ER motif; that stretch reads HEEL.

Belongs to the glycosyltransferase 8 family. As to quaternary structure, monomer as well as in a tight complex with SELENOF. Interacts with METTL23. Part of a large chaperone multiprotein complex comprising DNAJB11, HSP90B1, HSPA5, HYOU, PDIA2, PDIA4, PDIA6, PPIB, SDF2L1, UGGT1 and very small amounts of ERP29, but not, or at very low levels, CALR nor CANX. Requires Ca(2+) as cofactor. Mn(2+) serves as cofactor.

It is found in the endoplasmic reticulum lumen. The protein resides in the endoplasmic reticulum-Golgi intermediate compartment. The enzyme catalyses N(4)-(alpha-D-Man-(1-&gt;2)-alpha-D-Man-(1-&gt;2)-alpha-D-Man-(1-&gt;3)-[alpha-D-Man-(1-&gt;2)-alpha-D-Man-(1-&gt;3)-[alpha-D-Man-(1-&gt;2)-alpha-D-Man-(1-&gt;6)]-alpha-D-Man-(1-&gt;6)]-beta-D-Man-(1-&gt;4)-beta-D-GlcNAc-(1-&gt;4)-beta-D-GlcNAc)-L-asparaginyl-[protein] (N-glucan mannose isomer 9A1,2,3B1,2,3) + UDP-alpha-D-glucose = N(4)-(alpha-D-Glc-(1-&gt;3)-alpha-D-Man-(1-&gt;2)-alpha-D-Man-(1-&gt;2)-alpha-D-Man-(1-&gt;3)-[alpha-D-Man-(1-&gt;2)-alpha-D-Man-(1-&gt;3)-[alpha-D-Man-(1-&gt;2)-alpha-D-Man-(1-&gt;6)]-alpha-D-Man-(1-&gt;6)]-beta-D-Man-(1-&gt;4)-beta-D-GlcNAc-(1-&gt;4)-beta-D-GlcNAc)-L-asparaginyl-[protein] + UDP + H(+). The protein operates within protein modification; protein glycosylation. In terms of biological role, recognizes glycoproteins with minor folding defects. Reglucosylates single N-glycans near the misfolded part of the protein, thus providing quality control for protein folding in the endoplasmic reticulum. Reglucosylated proteins are recognized by calreticulin for recycling to the endoplasmic reticulum and refolding or degradation. This chain is UDP-glucose:glycoprotein glucosyltransferase 1 (Uggt1), found in Mus musculus (Mouse).